The primary structure comprises 473 residues: Cysteine--tRNA ligase (473 aa).

Cys-28 contacts Zn(2+). The short motif at 30-40 (PTVYNYIHIGN) is the 'HIGH' region element. The Zn(2+) site is built by Cys-210, His-235, and Glu-239. Residues 267-271 (KMSKS) carry the 'KMSKS' region motif. Lys-270 lines the ATP pocket.

The protein belongs to the class-I aminoacyl-tRNA synthetase family. Monomer. Zn(2+) serves as cofactor.

It is found in the cytoplasm. The catalysed reaction is tRNA(Cys) + L-cysteine + ATP = L-cysteinyl-tRNA(Cys) + AMP + diphosphate. In Fusobacterium nucleatum subsp. nucleatum (strain ATCC 25586 / DSM 15643 / BCRC 10681 / CIP 101130 / JCM 8532 / KCTC 2640 / LMG 13131 / VPI 4355), this protein is Cysteine--tRNA ligase.